The sequence spans 419 residues: Gamma-glutamyl phosphate reductase (419 aa).

It belongs to the gamma-glutamyl phosphate reductase family.

Its subcellular location is the cytoplasm. The enzyme catalyses L-glutamate 5-semialdehyde + phosphate + NADP(+) = L-glutamyl 5-phosphate + NADPH + H(+). Its pathway is amino-acid biosynthesis; L-proline biosynthesis; L-glutamate 5-semialdehyde from L-glutamate: step 2/2. In terms of biological role, catalyzes the NADPH-dependent reduction of L-glutamate 5-phosphate into L-glutamate 5-semialdehyde and phosphate. The product spontaneously undergoes cyclization to form 1-pyrroline-5-carboxylate. This is Gamma-glutamyl phosphate reductase from Yersinia enterocolitica serotype O:8 / biotype 1B (strain NCTC 13174 / 8081).